The sequence spans 506 residues: Histidine ammonia-lyase (506 aa).

The segment at residues 143-145 (ASG) is a cross-link (5-imidazolinone (Ala-Gly)). Serine 144 is modified (2,3-didehydroalanine (Ser)).

The protein belongs to the PAL/histidase family. Contains an active site 4-methylidene-imidazol-5-one (MIO), which is formed autocatalytically by cyclization and dehydration of residues Ala-Ser-Gly.

It is found in the cytoplasm. It catalyses the reaction L-histidine = trans-urocanate + NH4(+). It functions in the pathway amino-acid degradation; L-histidine degradation into L-glutamate; N-formimidoyl-L-glutamate from L-histidine: step 1/3. This Citrobacter koseri (strain ATCC BAA-895 / CDC 4225-83 / SGSC4696) protein is Histidine ammonia-lyase.